Reading from the N-terminus, the 318-residue chain is NADH-ubiquinone oxidoreductase chain 1 (318 aa).

8 helical membrane passes run Phe-2 to Leu-22, Thr-76 to Ile-96, Leu-102 to Ala-122, Leu-146 to Ile-166, Tyr-171 to Ala-191, Ala-217 to Leu-237, Glu-253 to Val-273, and Leu-294 to Ile-314.

Belongs to the complex I subunit 1 family. In terms of assembly, core subunit of respiratory chain NADH dehydrogenase (Complex I) which is composed of 45 different subunits.

It localises to the mitochondrion inner membrane. It catalyses the reaction a ubiquinone + NADH + 5 H(+)(in) = a ubiquinol + NAD(+) + 4 H(+)(out). Functionally, core subunit of the mitochondrial membrane respiratory chain NADH dehydrogenase (Complex I) which catalyzes electron transfer from NADH through the respiratory chain, using ubiquinone as an electron acceptor. Essential for the catalytic activity and assembly of complex I. This Lemur catta (Ring-tailed lemur) protein is NADH-ubiquinone oxidoreductase chain 1 (MT-ND1).